We begin with the raw amino-acid sequence, 322 residues long: Beta-ketoacyl-[acyl-carrier-protein] synthase III (322 aa).

Active-site residues include cysteine 113 and histidine 247. The interval 248–252 (QANIR) is ACP-binding. Asparagine 278 is a catalytic residue.

It belongs to the thiolase-like superfamily. FabH family. In terms of assembly, homodimer.

It localises to the cytoplasm. It catalyses the reaction malonyl-[ACP] + acetyl-CoA + H(+) = 3-oxobutanoyl-[ACP] + CO2 + CoA. The protein operates within lipid metabolism; fatty acid biosynthesis. Catalyzes the condensation reaction of fatty acid synthesis by the addition to an acyl acceptor of two carbons from malonyl-ACP. Catalyzes the first condensation reaction which initiates fatty acid synthesis and may therefore play a role in governing the total rate of fatty acid production. Possesses both acetoacetyl-ACP synthase and acetyl transacylase activities. Its substrate specificity determines the biosynthesis of branched-chain and/or straight-chain of fatty acids. This Tropheryma whipplei (strain TW08/27) (Whipple's bacillus) protein is Beta-ketoacyl-[acyl-carrier-protein] synthase III.